A 188-amino-acid chain; its full sequence is Kappa-casein (188 aa).

Residues 1 to 21 (MMKSSFLIVPILALTLPFLGA) form the signal peptide. O-linked (GalNAc...) threonine glycans are attached at residues Thr-143 and Thr-148. Thr-163 carries the phosphothreonine modification. The residue at position 167 (Ser-167) is a Phosphoserine; alternate. An O-linked (GalNAc...) serine; alternate glycan is attached at Ser-167. O-linked (GalNAc...) threonine glycosylation is present at Thr-184. At Ser-185 the chain carries Phosphoserine.

Belongs to the kappa-casein family. Mammary gland specific. Secreted in milk.

Its subcellular location is the secreted. Its function is as follows. Kappa-casein stabilizes micelle formation, preventing casein precipitation in milk. The protein is Kappa-casein (CSN3) of Sus scrofa (Pig).